A 72-amino-acid chain; its full sequence is Cytochrome b-c1 complex subunit 8 (72 aa).

Residues 2–41 lie on the Mitochondrial matrix side of the membrane; sequence GKQPVKLKAVVYAISPFQQKIMPGLWKDLPGKIHHKVSEN. The helical transmembrane segment at 42–59 threads the bilayer; it reads WISATLLLGPLVGTYSYV. Residues 60–72 lie on the Mitochondrial intermembrane side of the membrane; that stretch reads QHFLEKEKLEHRY.

It belongs to the UQCRQ/QCR8 family. As to quaternary structure, component of the ubiquinol-cytochrome c oxidoreductase (cytochrome b-c1 complex, complex III, CIII), a multisubunit enzyme composed of 3 respiratory subunits cytochrome b, cytochrome c1 and Rieske protein, 2 core protein subunits, and additional low-molecular weight protein subunits. The complex exists as an obligatory dimer and forms supercomplexes (SCs) in the inner mitochondrial membrane with cytochrome c oxidase (complex IV, CIV).

It is found in the mitochondrion inner membrane. Functionally, component of the ubiquinol-cytochrome c oxidoreductase, a multisubunit transmembrane complex that is part of the mitochondrial electron transport chain which drives oxidative phosphorylation. The respiratory chain contains 3 multisubunit complexes succinate dehydrogenase (complex II, CII), ubiquinol-cytochrome c oxidoreductase (cytochrome b-c1 complex, complex III, CIII) and cytochrome c oxidase (complex IV, CIV), that cooperate to transfer electrons derived from NADH and succinate to molecular oxygen, creating an electrochemical gradient over the inner membrane that drives transmembrane transport and the ATP synthase. The cytochrome b-c1 complex catalyzes electron transfer from ubiquinol to cytochrome c, linking this redox reaction to translocation of protons across the mitochondrial inner membrane, with protons being carried across the membrane as hydrogens on the quinol. In the process called Q cycle, 2 protons are consumed from the matrix, 4 protons are released into the intermembrane space and 2 electrons are passed to cytochrome c. The sequence is that of Cytochrome b-c1 complex subunit 8 from Solanum tuberosum (Potato).